Consider the following 105-residue polypeptide: ESAT-6-like protein EsxU (105 aa).

The protein belongs to the WXG100 family. CFP-10 subfamily. As to quaternary structure, forms a tight 1:1 complex with EsxT. Complex formation results in induction of alpha-helical conformation and stability against chemical denaturation.

It localises to the secreted. This chain is ESAT-6-like protein EsxU, found in Mycobacterium tuberculosis (strain ATCC 25618 / H37Rv).